The chain runs to 299 residues: ATP phosphoribosyltransferase (299 aa).

The protein belongs to the ATP phosphoribosyltransferase family. Long subfamily. The cofactor is Mg(2+).

It is found in the cytoplasm. It carries out the reaction 1-(5-phospho-beta-D-ribosyl)-ATP + diphosphate = 5-phospho-alpha-D-ribose 1-diphosphate + ATP. The protein operates within amino-acid biosynthesis; L-histidine biosynthesis; L-histidine from 5-phospho-alpha-D-ribose 1-diphosphate: step 1/9. Feedback inhibited by histidine. Its function is as follows. Catalyzes the condensation of ATP and 5-phosphoribose 1-diphosphate to form N'-(5'-phosphoribosyl)-ATP (PR-ATP). Has a crucial role in the pathway because the rate of histidine biosynthesis seems to be controlled primarily by regulation of HisG enzymatic activity. The sequence is that of ATP phosphoribosyltransferase from Campylobacter jejuni subsp. doylei (strain ATCC BAA-1458 / RM4099 / 269.97).